The primary structure comprises 413 residues: Multidrug resistance protein MdtA (413 aa).

The N-terminal stretch at 1-20 is a signal peptide; the sequence is MKGSNTFRWAIAIGVVVAAA. Disordered stretches follow at residues 31 to 57 and 392 to 413; these read SPTA…RDGP and PQTT…GARA. Over residues 397-413 the composition is skewed to basic and acidic residues; it reads ADEKSPSRHEGQKGARA.

This sequence belongs to the membrane fusion protein (MFP) (TC 8.A.1) family. In terms of assembly, part of a tripartite efflux system composed of MdtA, MdtB and MdtC.

The protein localises to the cell inner membrane. The polypeptide is Multidrug resistance protein MdtA (Salmonella heidelberg (strain SL476)).